The following is a 573-amino-acid chain: 60 kDa heat shock protein, mitochondrial (573 aa).

Residues 1-26 (MLRLPTVFRQMRPVSRVLAPHLTRAY) constitute a mitochondrion transit peptide. N6-succinyllysine is present on K31. Phosphoserine is present on residues S67 and S70. K75 provides a ligand contact to ATP. At K75 the chain carries N6-acetyllysine. K82 is subject to N6-acetyllysine; alternate. K82 carries the post-translational modification N6-succinyllysine; alternate. N6-acetyllysine is present on K87. Y90 carries the phosphotyrosine modification. K91 carries the post-translational modification N6-acetyllysine. Position 111–115 (111–115 (DGTTT)) interacts with ATP. An N6-acetyllysine; alternate modification is found at K125. N6-succinyllysine; alternate is present on K125. K130 carries the N6-acetyllysine modification. K133 carries the post-translational modification N6-acetyllysine; alternate. K133 bears the N6-succinyllysine; alternate mark. K133 is subject to N6-malonyllysine; alternate. K156 is modified (N6-acetyllysine). K191, K202, K205, K218, and K236 each carry N6-acetyllysine; alternate. Residues K191, K202, K205, K218, and K236 each carry the N6-succinyllysine; alternate modification. K249 bears the N6-acetyllysine mark. K250 carries the N6-acetyllysine; alternate modification. At K250 the chain carries N6-succinyllysine; alternate. K269 and K292 each carry N6-acetyllysine. K301 carries the post-translational modification N6-succinyllysine. K314 is modified (N6-acetyllysine). K352 carries the N6-acetyllysine; alternate modification. K352 bears the N6-succinyllysine; alternate mark. At K389 the chain carries N6-acetyllysine. N6-acetyllysine; alternate is present on K396. At K396 the chain carries N6-succinyllysine; alternate. S410 carries the post-translational modification Phosphoserine. Residue G440 coordinates ATP. Residue K469 is modified to N6-acetyllysine. Position 481 is an N6-acetyllysine; alternate (K481). K481 carries the post-translational modification N6-succinyllysine; alternate. S488 is subject to Phosphoserine. ATP is bound at residue D520. A Glycyl lysine isopeptide (Lys-Gly) (interchain with G-Cter in SUMO2) cross-link involves residue K551.

It belongs to the chaperonin (HSP60) family. As to quaternary structure, homoheptamer arranged in a ring structure. The functional units of these chaperonins consist of heptameric rings of the large subunit Hsp60, which function as a back-to-back double ring. Interacts with 2 heptameric Hsp10 rings to form the symmetrical football complex. Interacts with HRAS. Interacts with ATAD3A. Interacts with ETFBKMT and EEF1AKMT3. Interacts with MFHAS1.

The protein localises to the mitochondrion matrix. It catalyses the reaction ATP + H2O + a folded polypeptide = ADP + phosphate + an unfolded polypeptide.. Its function is as follows. Chaperonin implicated in mitochondrial protein import and macromolecular assembly. Together with Hsp10, facilitates the correct folding of imported proteins. May also prevent misfolding and promote the refolding and proper assembly of unfolded polypeptides generated under stress conditions in the mitochondrial matrix. The functional units of these chaperonins consist of heptameric rings of the large subunit Hsp60, which function as a back-to-back double ring. In a cyclic reaction, Hsp60 ring complexes bind one unfolded substrate protein per ring, followed by the binding of ATP and association with 2 heptameric rings of the co-chaperonin Hsp10. This leads to sequestration of the substrate protein in the inner cavity of Hsp60 where, for a certain period of time, it can fold undisturbed by other cell components. Synchronous hydrolysis of ATP in all Hsp60 subunits results in the dissociation of the chaperonin rings and the release of ADP and the folded substrate protein. The chain is 60 kDa heat shock protein, mitochondrial (HSPD1) from Pongo abelii (Sumatran orangutan).